A 361-amino-acid polypeptide reads, in one-letter code: Phospho-N-acetylmuramoyl-pentapeptide-transferase (361 aa).

Transmembrane regions (helical) follow at residues 27–47, 70–90, 97–117, 134–154, 167–187, 199–219, 236–256, 263–283, 288–308, and 338–358; these read ILAS…MIRW, GTPT…CLLW, SLWL…VDDY, YFWQ…NASL, TVTW…IVGS, GLAI…AYAS, TGEL…FLWY, VFMG…VAVV, LVLL…ILQV, and KVIV…LATL.

It belongs to the glycosyltransferase 4 family. MraY subfamily. Mg(2+) serves as cofactor.

It is found in the cell inner membrane. The enzyme catalyses UDP-N-acetyl-alpha-D-muramoyl-L-alanyl-gamma-D-glutamyl-meso-2,6-diaminopimeloyl-D-alanyl-D-alanine + di-trans,octa-cis-undecaprenyl phosphate = di-trans,octa-cis-undecaprenyl diphospho-N-acetyl-alpha-D-muramoyl-L-alanyl-D-glutamyl-meso-2,6-diaminopimeloyl-D-alanyl-D-alanine + UMP. It participates in cell wall biogenesis; peptidoglycan biosynthesis. Catalyzes the initial step of the lipid cycle reactions in the biosynthesis of the cell wall peptidoglycan: transfers peptidoglycan precursor phospho-MurNAc-pentapeptide from UDP-MurNAc-pentapeptide onto the lipid carrier undecaprenyl phosphate, yielding undecaprenyl-pyrophosphoryl-MurNAc-pentapeptide, known as lipid I. This chain is Phospho-N-acetylmuramoyl-pentapeptide-transferase, found in Legionella pneumophila subsp. pneumophila (strain Philadelphia 1 / ATCC 33152 / DSM 7513).